The following is a 223-amino-acid chain: Neurotrophic factor BDNF precursor form (223 aa).

Residues 1–5 form the signal peptide; that stretch reads SCMKA. Residues 6–114 constitute a propeptide that is removed on maturation; the sequence is APMKEVSIRG…AANMSMRVRR (109 aa). Residue asparagine 107 is glycosylated (N-linked (GlcNAc...) asparagine). Cystine bridges form between cysteine 127–cysteine 194 and cysteine 172–cysteine 223.

This sequence belongs to the NGF-beta family.

It localises to the secreted. In terms of biological role, promotes the survival of neuronal populations that are all located either in the central nervous system or directly connected to it. This chain is Neurotrophic factor BDNF precursor form (BDNF), found in Charina bottae (Northern rubber boa).